A 236-amino-acid chain; its full sequence is 2,3,4,5-tetrahydropyridine-2,6-dicarboxylate N-acetyltransferase (236 aa).

Belongs to the transferase hexapeptide repeat family. DapH subfamily.

It catalyses the reaction (S)-2,3,4,5-tetrahydrodipicolinate + acetyl-CoA + H2O = L-2-acetamido-6-oxoheptanedioate + CoA. It functions in the pathway amino-acid biosynthesis; L-lysine biosynthesis via DAP pathway; LL-2,6-diaminopimelate from (S)-tetrahydrodipicolinate (acetylase route): step 1/3. Its function is as follows. Catalyzes the transfer of an acetyl group from acetyl-CoA to tetrahydrodipicolinate. The polypeptide is 2,3,4,5-tetrahydropyridine-2,6-dicarboxylate N-acetyltransferase (Clostridium botulinum (strain Alaska E43 / Type E3)).